A 284-amino-acid polypeptide reads, in one-letter code: MDAIKKKMQAMKLEKDNAMDKADTLEQQNKEANLRAEKTEEEIRANQKKSQLVENELDHAQEQLSAATHKLVEKEKAFANAEGEVAALNRRIQLLEEDLERSEERLNTATTKLAEASQAADESERMRKVLENRSLSDEERMDALENQLKEARFLAEEADRKYDEVARKLAMVEADLERAEERAESGESKIVELEEELRVVGNNLKSLEVSEEKANQREETYKEQIKTLANKLKAAEARAEFAERSVQKLQKEVDRLEDELVNEKEKYKNIADEMDQAFSELSGF.

An N-acetylmethionine modification is found at methionine 1. Disordered regions lie at residues 1–49 (MDAI…NQKK) and 103–126 (EERL…SERM). Residues 1-284 (MDAIKKKMQA…DQAFSELSGF (284 aa)) adopt a coiled-coil conformation. Positions 12–45 (KLEKDNAMDKADTLEQQNKEANLRAEKTEEEIRA) are enriched in basic and acidic residues.

This sequence belongs to the tropomyosin family. Homodimer. As to expression, expressed in leg muscle and chest protection muscle (at protein level).

In terms of biological role, tropomyosin, in association with the troponin complex, plays a central role in the calcium dependent regulation of muscle contraction. This chain is Tropomyosin, found in Chionoecetes opilio (Atlantic snow crab).